A 97-amino-acid polypeptide reads, in one-letter code: Osteocalcin (97 aa).

A signal peptide spans 1–18 (MKTLAILVLCSLAAICLT). The propeptide occupies 19–52 (SSASAGAQPAGDSPVQGGLFMEKDQASAVVRQTR). The region spanning 53-93 (AAKELTLAQTESLREVCETNMACDEMADAQGIVAAYQAFYG) is the Gla domain. Residues Glu-63, Glu-67, Glu-70, and Asp-76 each coordinate Ca(2+). Residues Glu-63, Glu-67, and Glu-70 each carry the 4-carboxyglutamate modification. Cys-69 and Cys-75 are disulfide-bonded. Glu-77 carries the post-translational modification 4-carboxyglutamate.

This sequence belongs to the osteocalcin/matrix Gla protein family. Gamma-carboxyglutamate residues are formed by vitamin K dependent carboxylation by GGCX. These residues are essential for the binding of calcium. In terms of tissue distribution, in the branchial arches, BGP is found outside the chondrocyte-containing zone. It is found in some cells in the basal zone of the branchial filaments, near the branchial arches, and within the extracellular matrix in the medial zone. In the vertebra, BGP is found in the mineralized bone matrix.

The protein localises to the secreted. In terms of biological role, the carboxylated form is one of the main organic components of the bone matrix, which constitutes 1-2% of the total bone protein. The carboxylated form binds strongly to apatite and calcium. This chain is Osteocalcin (bglap), found in Argyrosomus regius (Meagre).